The following is a 385-amino-acid chain: Anhydro-N-acetylmuramic acid kinase (385 aa).

Residue 12–19 (GTSLDGID) participates in ATP binding.

Belongs to the anhydro-N-acetylmuramic acid kinase family.

It carries out the reaction 1,6-anhydro-N-acetyl-beta-muramate + ATP + H2O = N-acetyl-D-muramate 6-phosphate + ADP + H(+). It functions in the pathway amino-sugar metabolism; 1,6-anhydro-N-acetylmuramate degradation. Its pathway is cell wall biogenesis; peptidoglycan recycling. Its function is as follows. Catalyzes the specific phosphorylation of 1,6-anhydro-N-acetylmuramic acid (anhMurNAc) with the simultaneous cleavage of the 1,6-anhydro ring, generating MurNAc-6-P. Is required for the utilization of anhMurNAc either imported from the medium or derived from its own cell wall murein, and thus plays a role in cell wall recycling. This is Anhydro-N-acetylmuramic acid kinase from Bacillus thuringiensis (strain Al Hakam).